We begin with the raw amino-acid sequence, 152 residues long: D-aminoacyl-tRNA deacylase (152 aa).

The short motif at 142–143 (GP) is the Gly-cisPro motif, important for rejection of L-amino acids element.

This sequence belongs to the DTD family. In terms of assembly, homodimer.

The protein localises to the cytoplasm. It carries out the reaction glycyl-tRNA(Ala) + H2O = tRNA(Ala) + glycine + H(+). The catalysed reaction is a D-aminoacyl-tRNA + H2O = a tRNA + a D-alpha-amino acid + H(+). Functionally, an aminoacyl-tRNA editing enzyme that deacylates mischarged D-aminoacyl-tRNAs. Also deacylates mischarged glycyl-tRNA(Ala), protecting cells against glycine mischarging by AlaRS. Acts via tRNA-based rather than protein-based catalysis; rejects L-amino acids rather than detecting D-amino acids in the active site. By recycling D-aminoacyl-tRNA to D-amino acids and free tRNA molecules, this enzyme counteracts the toxicity associated with the formation of D-aminoacyl-tRNA entities in vivo and helps enforce protein L-homochirality. This Burkholderia lata (strain ATCC 17760 / DSM 23089 / LMG 22485 / NCIMB 9086 / R18194 / 383) protein is D-aminoacyl-tRNA deacylase.